The chain runs to 448 residues: Probable xyloglucan 6-xylosyltransferase 1 (448 aa).

The Cytoplasmic portion of the chain corresponds to 1–19; it reads MWVAERVVGERRMREIQRF. Residues 20–42 traverse the membrane as a helical; Signal-anchor for type II membrane protein segment; the sequence is ARNAKLTVVCLLLTVVVLRGTVG. At 43 to 448 the chain is on the lumenal side; that stretch reads AGKFGTPQQD…AFKAMKTTST (406 aa). The segment at 71–113 is disordered; that stretch reads HHDALSRGGGSSSSSGRAAQRDDEPDPPPRTLRDPPYTLGPKI. N421 is a glycosylation site (N-linked (GlcNAc...) asparagine).

This sequence belongs to the glycosyltransferase 34 family.

The protein resides in the golgi apparatus membrane. The enzyme catalyses Transfers an alpha-D-xylosyl residue from UDP-D-xylose to a glucose residue in xyloglucan, forming an alpha-(1-&gt;6)-D-xylosyl-D-glucose linkage.. Its function is as follows. Probable xyloglucan xylosyltransferase involved in the biosynthesis of xyloglucan in roots. The polypeptide is Probable xyloglucan 6-xylosyltransferase 1 (Oryza sativa subsp. indica (Rice)).